The following is a 69-amino-acid chain: Large ribosomal subunit protein uL29 (69 aa).

This sequence belongs to the universal ribosomal protein uL29 family.

In Synechococcus sp. (strain WH7803), this protein is Large ribosomal subunit protein uL29.